Consider the following 880-residue polypeptide: Valine--tRNA ligase (880 aa).

A 'HIGH' region motif is present at residues 51–61; it reads PNVTGELHLGH. The 'KMSKS' region signature appears at 529–533; the sequence is KMSKT. Lys-532 contacts ATP. A coiled-coil region spans residues 815 to 854; sequence MSTMVDLEVEAKRVKAEISELEIQIERLSTRLSDEQFLAK.

The protein belongs to the class-I aminoacyl-tRNA synthetase family. ValS type 1 subfamily. Monomer.

It localises to the cytoplasm. It carries out the reaction tRNA(Val) + L-valine + ATP = L-valyl-tRNA(Val) + AMP + diphosphate. Functionally, catalyzes the attachment of valine to tRNA(Val). As ValRS can inadvertently accommodate and process structurally similar amino acids such as threonine, to avoid such errors, it has a 'posttransfer' editing activity that hydrolyzes mischarged Thr-tRNA(Val) in a tRNA-dependent manner. The chain is Valine--tRNA ligase from Dehalococcoides mccartyi (strain CBDB1).